We begin with the raw amino-acid sequence, 102 residues long: UPF0751 protein Dhaf_1351 (102 aa).

This sequence belongs to the UPF0751 family.

This chain is UPF0751 protein Dhaf_1351, found in Desulfitobacterium hafniense (strain DSM 10664 / DCB-2).